A 251-amino-acid polypeptide reads, in one-letter code: Zinc import ATP-binding protein ZnuC (251 aa).

The 216-residue stretch at 5–220 (VSLENVSVSF…PEFISMFGPR (216 aa)) folds into the ABC transporter domain. 37-44 (GPNGAGKS) is a binding site for ATP.

The protein belongs to the ABC transporter superfamily. Zinc importer (TC 3.A.1.15.5) family. As to quaternary structure, the complex is composed of two ATP-binding proteins (ZnuC), two transmembrane proteins (ZnuB) and a solute-binding protein (ZnuA).

It is found in the cell inner membrane. The catalysed reaction is Zn(2+)(out) + ATP(in) + H2O(in) = Zn(2+)(in) + ADP(in) + phosphate(in) + H(+)(in). In terms of biological role, part of the ABC transporter complex ZnuABC involved in zinc import. Responsible for energy coupling to the transport system. This is Zinc import ATP-binding protein ZnuC from Shigella flexneri serotype 5b (strain 8401).